The chain runs to 426 residues: Serine--tRNA ligase (426 aa).

Position 233–235 (233–235 (TAE)) interacts with L-serine. 264-266 (RSE) lines the ATP pocket. Glu-287 serves as a coordination point for L-serine. An ATP-binding site is contributed by 351 to 354 (EISS). Ser-387 provides a ligand contact to L-serine.

This sequence belongs to the class-II aminoacyl-tRNA synthetase family. Type-1 seryl-tRNA synthetase subfamily. In terms of assembly, homodimer. The tRNA molecule binds across the dimer.

Its subcellular location is the cytoplasm. It carries out the reaction tRNA(Ser) + L-serine + ATP = L-seryl-tRNA(Ser) + AMP + diphosphate + H(+). It catalyses the reaction tRNA(Sec) + L-serine + ATP = L-seryl-tRNA(Sec) + AMP + diphosphate + H(+). Its pathway is aminoacyl-tRNA biosynthesis; selenocysteinyl-tRNA(Sec) biosynthesis; L-seryl-tRNA(Sec) from L-serine and tRNA(Sec): step 1/1. Catalyzes the attachment of serine to tRNA(Ser). Is also able to aminoacylate tRNA(Sec) with serine, to form the misacylated tRNA L-seryl-tRNA(Sec), which will be further converted into selenocysteinyl-tRNA(Sec). This Pseudomonas fluorescens (strain Pf0-1) protein is Serine--tRNA ligase.